The following is a 402-amino-acid chain: Putative neuropeptide Y receptor 11 (402 aa).

Topologically, residues 1 to 45 (MGSVNESCDNYVEIFNKINYFFRDDQVINGTEYSPKEFGYFITFA) are extracellular. Asparagine 5 and asparagine 29 each carry an N-linked (GlcNAc...) asparagine glycan. Residues 46–66 (YMLIILFGAIGNFLTIIVVIL) traverse the membrane as a helical segment. At 67-85 (NPAMRTTRNFFILNLALSD) the chain is on the cytoplasmic side. Residues 86-106 (FFVCIVTAPTTLYTVLYMFWP) form a helical membrane-spanning segment. Residues 107-122 (FSRTLCKIAGSLQGFN) lie on the Extracellular side of the membrane. A disulfide bridge connects residues cysteine 112 and cysteine 194. Residues 123–143 (IFLSTFSIASIAVDRYVLIIF) traverse the membrane as a helical segment. The Cytoplasmic portion of the chain corresponds to 144 to 152 (PTKRERQQN). The helical transmembrane segment at 153 to 173 (LSFCFFIMIWVISLILAVPLL) threads the bilayer. Residues 174 to 210 (QASDLTPVFVEPSCDLALYICHEQNEIWEKMIISKGT) are Extracellular-facing. The helical transmembrane segment at 211–231 (YTLAVLITQYAFPLFSLVFAY) threads the bilayer. The Cytoplasmic segment spans residues 232 to 272 (SRIAHRMKLRFANRNQNVTTNTNTSQRRRSVVERQRRTHLL). The chain crosses the membrane as a helical span at residues 273–293 (LVCVVAVFAVAWLPLNVFHIF). Topologically, residues 294–306 (NTFELVNSFSVTT) are extracellular. The helical transmembrane segment at 307–328 (FSICHCLAMCSACLNPLIYAFF) threads the bilayer. Topologically, residues 329-402 (NHNFRIEFMH…LSAMEQDEQL (74 aa)) are cytoplasmic.

Belongs to the G-protein coupled receptor 1 family.

It localises to the cell membrane. Functionally, could be a receptor for neuropeptide Y and peptide YY. The protein is Putative neuropeptide Y receptor 11 (npr-11) of Caenorhabditis elegans.